We begin with the raw amino-acid sequence, 96 residues long: MASKKAPTGHFSILYFAAASTFTGKTSEHLPAPIKACDLFDTLEDRYPGIKGKVLASCAVTVDLEYIDINEGDAADLERVIQEGDEVAIIPPVSSG.

Glycine 96 bears the 1-thioglycine; alternate mark. At glycine 96 the chain carries Glycyl adenylate; alternate.

It belongs to the MoaD family. MOCS2A subfamily. In terms of assembly, heterotetramer; composed of 2 small (MOCS2A) and 2 large (MOCS2B) subunits. Post-translationally, C-terminal thiocarboxylation occurs in 2 steps, it is first acyl-adenylated (-COAMP) via the hesA/moeB/thiF part of UBA4, then thiocarboxylated (-COSH) via the rhodanese domain of UBA4.

It localises to the cytoplasm. It participates in cofactor biosynthesis; molybdopterin biosynthesis. Acts as a sulfur carrier required for molybdopterin biosynthesis. Component of the molybdopterin synthase complex that catalyzes the conversion of precursor Z into molybdopterin by mediating the incorporation of 2 sulfur atoms into precursor Z to generate a dithiolene group. In the complex, serves as sulfur donor by being thiocarboxylated (-COSH) at its C-terminus by UBA4. After interaction with MOCS2B, the sulfur is then transferred to precursor Z to form molybdopterin. This Phaeosphaeria nodorum (strain SN15 / ATCC MYA-4574 / FGSC 10173) (Glume blotch fungus) protein is Molybdopterin synthase sulfur carrier subunit.